Here is a 234-residue protein sequence, read N- to C-terminus: Large ribosomal subunit protein uL1 (234 aa).

Belongs to the universal ribosomal protein uL1 family. As to quaternary structure, part of the 50S ribosomal subunit.

Its function is as follows. Binds directly to 23S rRNA. The L1 stalk is quite mobile in the ribosome, and is involved in E site tRNA release. Functionally, protein L1 is also a translational repressor protein, it controls the translation of the L11 operon by binding to its mRNA. This is Large ribosomal subunit protein uL1 from Aliivibrio fischeri (strain MJ11) (Vibrio fischeri).